The primary structure comprises 263 residues: LIM and SH3 domain protein 1 (263 aa).

Residue Met1 is modified to N-acetylmethionine. Positions 3-63 (PNCARCGKIV…NAHYPKQSFT (61 aa)) constitute an LIM zinc-binding domain. The residue at position 42 (Lys42) is an N6-acetyllysine. Nebulin repeat units follow at residues 64 to 95 (MVAD…KNKG) and 97 to 131 (GFSV…KSRM). Thr68 carries the post-translational modification Phosphothreonine. At Lys75 the chain carries N6-methyllysine. Ser99 carries the phosphoserine modification. At Thr104 the chain carries Phosphothreonine. The residue at position 112 (Lys112) is an N6-succinyllysine. A phosphoserine mark is found at Ser118 and Ser134. The tract at residues 122 to 207 (YHEEFEKSRM…QRSAPGGGGK (86 aa)) is disordered. Residues 148–162 (DSSSYRRPTEQQQPQ) are compositionally biased toward polar residues. Positions 204 to 263 (GGGKRYRAVYDYSAADEDEVSFQDGDTIVNVQQIDDGWMYGTVERTGDTGMLPANYVEAI) constitute an SH3 domain.

In terms of assembly, interacts with F-actin. Interacts with ANKRD54. Interacts with KBTBD10. Post-translationally, phosphorylated. Expressed in a wide range of tissues (but not the heart or skeletal muscle), the expression is specific for certain actin-rich cell types within these tissues. Expression is prominent in the cortical regions of ion-transporting duct cells in the pancreas, in the salivary parotid gland and in certain F-actin-rich cells in the distal tubule/collecting duct. In primary cultures of gastric fibroblasts, expression is mainly within the tips of lamellipodia and at the leading edges of membrane ruffles.

The protein resides in the cytoplasm. Its subcellular location is the cell cortex. The protein localises to the cytoskeleton. Its function is as follows. Plays an important role in the regulation of dynamic actin-based, cytoskeletal activities. Agonist-dependent changes in LASP1 phosphorylation may also serve to regulate actin-associated ion transport activities, not only in the parietal cell but also in certain other F-actin-rich secretory epithelial cell types. This chain is LIM and SH3 domain protein 1, found in Rattus norvegicus (Rat).